The primary structure comprises 180 residues: Sec-independent protein translocase protein TatB (180 aa).

The helical transmembrane segment at 1-21 (MFDIGWSELLVIGVVALIAIG) threads the bilayer. The disordered stretch occupies residues 77–180 (TRGDLMTRLT…DQTARGAKAS (104 aa)). The span at 105 to 129 (ADKPSVSSDAASASGSAAPEAGAAE) shows a compositional bias: low complexity.

It belongs to the TatB family. The Tat system comprises two distinct complexes: a TatABC complex, containing multiple copies of TatA, TatB and TatC subunits, and a separate TatA complex, containing only TatA subunits. Substrates initially bind to the TatABC complex, which probably triggers association of the separate TatA complex to form the active translocon.

It localises to the cell inner membrane. Functionally, part of the twin-arginine translocation (Tat) system that transports large folded proteins containing a characteristic twin-arginine motif in their signal peptide across membranes. Together with TatC, TatB is part of a receptor directly interacting with Tat signal peptides. TatB may form an oligomeric binding site that transiently accommodates folded Tat precursor proteins before their translocation. The chain is Sec-independent protein translocase protein TatB from Nitrobacter winogradskyi (strain ATCC 25391 / DSM 10237 / CIP 104748 / NCIMB 11846 / Nb-255).